The following is a 312-amino-acid chain: Carbonic anhydrase 4 (312 aa).

Residues 1 to 18 form the signal peptide; the sequence is MRLLLALLVLAAAPPQAR. The Alpha-carbonic anhydrase domain maps to 21–285; sequence SHWCYQIQVK…LGQRQVFRSG (265 aa). 2 disulfides stabilise this stretch: Cys24–Cys36 and Cys46–Cys229. Residue Asn33 is glycosylated (N-linked (GlcNAc...) asparagine). His88 acts as the Proton donor/acceptor in catalysis. His115, His117, and His140 together coordinate Zn(2+). N-linked (GlcNAc...) asparagine glycosylation is found at Asn152 and Asn195. 225–226 lines the substrate pocket; it reads TT. The N-linked (GlcNAc...) asparagine glycan is linked to Asn265. The GPI-anchor amidated serine moiety is linked to residue Ser284. The propeptide at 285–312 is removed in mature form; that stretch reads GAPGLLLAQPLPTLLAPVLACLTVGFLR.

Belongs to the alpha-carbonic anhydrase family. As to quaternary structure, interacts with SLC4A4. Requires Zn(2+) as cofactor.

Its subcellular location is the cell membrane. It catalyses the reaction hydrogencarbonate + H(+) = CO2 + H2O. Inhibited by acetazolamide. Catalyzes the reversible hydration of carbon dioxide into bicarbonate and protons and thus is essential to maintaining intracellular and extracellular pH. May stimulate the sodium/bicarbonate transporter activity of SLC4A4 that acts in pH homeostasis. It is essential for acid overload removal from the retina and retina epithelium, and acid release in the choriocapillaris in the choroid. This is Carbonic anhydrase 4 (CA4) from Bos taurus (Bovine).